A 505-amino-acid chain; its full sequence is Tyrosine-protein kinase Blk (505 aa).

The interval 1–37 is disordered; the sequence is MGLVSSKKPDKEKPIKEKDKGQWSPLKVSAQDKDAPP. The N-myristoyl glycine moiety is linked to residue G2. Positions 7–21 are enriched in basic and acidic residues; that stretch reads KKPDKEKPIKEKDKG. One can recognise an SH3 domain in the interval 58-118; it reads EDKHFVVALY…PSNFVARVES (61 aa). In terms of domain architecture, SH2 spans 124–220; the sequence is WFFRSQGRKE…GLCQRLTLPC (97 aa). The Protein kinase domain maps to 241-494; the sequence is LRLVRKLGSG…FLQSVLEDFY (254 aa). ATP contacts are provided by residues 247–255 and K269; that span reads LGSGQFGEV. D360 serves as the catalytic Proton acceptor. Y389 is modified (phosphotyrosine; by autocatalysis).

Belongs to the protein kinase superfamily. Tyr protein kinase family. SRC subfamily. Interacts with CBL (via SH2 domain). Interacts with CD79A and CD79B (via SH2 domain). In terms of processing, phosphorylated on tyrosine residues after antibody-mediated surface engagement of the B-cell antigen receptor (BCR). Ubiquitination of activated BLK by the UBE3A ubiquitin protein ligase leads to its degradation by the ubiquitin-proteasome pathway. In terms of tissue distribution, expressed in lymphatic organs, pancreatic islets, Leydig cells, striate ducts of salivary glands and hair follicles.

Its subcellular location is the cell membrane. It catalyses the reaction L-tyrosyl-[protein] + ATP = O-phospho-L-tyrosyl-[protein] + ADP + H(+). Antibody-mediated surface engagement of the B-cell antigen receptor (BCR) which results in the phosphorylation of BLK on tyrosine residues, stimulates the enzymatic activity. Functionally, non-receptor tyrosine kinase involved in B-lymphocyte development, differentiation and signaling. B-cell receptor (BCR) signaling requires a tight regulation of several protein tyrosine kinases and phosphatases, and associated coreceptors. Binding of antigen to the B-cell antigen receptor (BCR) triggers signaling that ultimately leads to B-cell activation. Signaling through BLK plays an important role in transmitting signals through surface immunoglobulins and supports the pro-B to pre-B transition, as well as the signaling for growth arrest and apoptosis downstream of B-cell receptor. Specifically binds and phosphorylates CD79A at 'Tyr-188'and 'Tyr-199', as well as CD79B at 'Tyr-196' and 'Tyr-207'. Also phosphorylates the immunoglobulin G receptors FCGR2A, FCGR2B and FCGR2C. With FYN and LYN, plays an essential role in pre-B-cell receptor (pre-BCR)-mediated NF-kappa-B activation. Also contributes to BTK activation by indirectly stimulating BTK intramolecular autophosphorylation. In pancreatic islets, acts as a modulator of beta-cells function through the up-regulation of PDX1 and NKX6-1 and consequent stimulation of insulin secretion in response to glucose. Phosphorylates CGAS, promoting retention of CGAS in the cytosol. The sequence is that of Tyrosine-protein kinase Blk (BLK) from Homo sapiens (Human).